The following is a 400-amino-acid chain: Elongation factor Tu (400 aa).

In terms of domain architecture, tr-type G spans 10-210; the sequence is KPHVNVGTIG…ALDSYIPEPV (201 aa). Residues 19–26 form a G1 region; the sequence is GHVDHGKT. Position 19–26 (19–26) interacts with GTP; sequence GHVDHGKT. Thr-26 contacts Mg(2+). The tract at residues 66-70 is G2; sequence ILTIA. The segment at 87-90 is G3; that stretch reads DCPG. GTP-binding positions include 87-91 and 142-145; these read DCPGH and NKCD. The interval 142–145 is G4; that stretch reads NKCD. Residues 180-182 form a G5 region; sequence SAI.

It belongs to the TRAFAC class translation factor GTPase superfamily. Classic translation factor GTPase family. EF-Tu/EF-1A subfamily. In terms of assembly, monomer.

The protein localises to the cytoplasm. It carries out the reaction GTP + H2O = GDP + phosphate + H(+). Its function is as follows. GTP hydrolase that promotes the GTP-dependent binding of aminoacyl-tRNA to the A-site of ribosomes during protein biosynthesis. The polypeptide is Elongation factor Tu (Gemmatimonas aurantiaca (strain DSM 14586 / JCM 11422 / NBRC 100505 / T-27)).